Reading from the N-terminus, the 507-residue chain is Cytochrome P450 monooxygenase helB2 (507 aa).

Residues 1 to 22 (MALPIILCLAVILWTSWRLLDA) form the signal peptide. Cys-436 contacts heme.

This sequence belongs to the cytochrome P450 family. Requires heme as cofactor.

The protein operates within mycotoxin biosynthesis. Cytochrome P450 monooxygenase; part of the gene cluster that mediates the biosynthesis of helvolic acid, an antibacterial nortriterpenoid. Protostadienol synthase helA cyclizes (3S)-oxidosqualene to (17Z)-protosta-17(20),24-dien-3-beta-ol (protostadienol). The synthesis of protostadienol is followed by several steps of monooxygenation, dehydrogenation, and acyl transfer to yield the final helvolic acid. Following the cyclization to the tetracyclic protostadienol by helA, cytochrome P450 monooxygenases helB1-mediated and helB2-mediated oxidation at C-4 and C-16, acyltransferase helD2-dependent acetylation of 16-OH, oxidation of C-21 by cytochrome P450 monooxygenase helB4, and short chain dehydrogenase helC-dependent oxidative decarboxylation yield the fusidane skeleton. This intermediate is further modified in three additional steps mediated by the cytochrome P450 monooxygenase helB3, the acyltransferase helD1, and the 3-ketosteroid 1-dehydrogenase helE to give helvolic acid. Compared with the late stages in the biosynthesis of helvolic acid, enzymes involved in the early stage modifications act in a relatively strict order. The hydroxylation of C-16 by helB1 and subsequent acetylation by helD2 should occur before the helB3-mediated oxidation of C-21. C-4 demethylation in fusidane-type antibiotics proceeds in an unusual manner though it is also achieved by oxidative decarboxylation. The methyl group at C-4 beta position is oxidized by helB1 and subsequently removed by the short chain dehydrogenase helC. In Aspergillus fumigatus (strain ATCC MYA-4609 / CBS 101355 / FGSC A1100 / Af293) (Neosartorya fumigata), this protein is Cytochrome P450 monooxygenase helB2.